The sequence spans 88 residues: MLEDTTIHNAISDKALSSYFRSSGNLLEEESAVLGQAVTNLMLSGDNVNNKNIILSLIHSLETTSDILKADVIRKTLEIVLRYTADDM.

This sequence belongs to the AriR family. As to quaternary structure, homodimer.

Regulates expression of genes involved in acid-resistance and biofilm formation. May be a non-specific DNA-binding protein that binds genes and/or intergenic regions via a geometric recognition. The protein is Regulatory protein AriR (ariR) of Escherichia coli O1:K1 / APEC.